We begin with the raw amino-acid sequence, 314 residues long: Thymidylate synthase (314 aa).

DUMP is bound by residues arginine 21 and 176–177 (RR). Cysteine 196 acts as the Nucleophile in catalysis. DUMP contacts are provided by residues 216–219 (RSAD), asparagine 227, and 257–259 (HLY). Position 219 (aspartate 219) interacts with (6R)-5,10-methylene-5,6,7,8-tetrahydrofolate. Serine 313 provides a ligand contact to (6R)-5,10-methylene-5,6,7,8-tetrahydrofolate.

Belongs to the thymidylate synthase family. Bacterial-type ThyA subfamily. As to quaternary structure, homodimer.

The protein localises to the cytoplasm. It catalyses the reaction dUMP + (6R)-5,10-methylene-5,6,7,8-tetrahydrofolate = 7,8-dihydrofolate + dTMP. It functions in the pathway pyrimidine metabolism; dTTP biosynthesis. Functionally, catalyzes the reductive methylation of 2'-deoxyuridine-5'-monophosphate (dUMP) to 2'-deoxythymidine-5'-monophosphate (dTMP) while utilizing 5,10-methylenetetrahydrofolate (mTHF) as the methyl donor and reductant in the reaction, yielding dihydrofolate (DHF) as a by-product. This enzymatic reaction provides an intracellular de novo source of dTMP, an essential precursor for DNA biosynthesis. The protein is Thymidylate synthase of Listeria monocytogenes serovar 1/2a (strain ATCC BAA-679 / EGD-e).